The following is a 429-amino-acid chain: Glutamate-1-semialdehyde 2,1-aminomutase 2 (429 aa).

The residue at position 268 (Lys-268) is an N6-(pyridoxal phosphate)lysine.

Belongs to the class-III pyridoxal-phosphate-dependent aminotransferase family. HemL subfamily. As to quaternary structure, homodimer. The cofactor is pyridoxal 5'-phosphate.

It is found in the cytoplasm. The catalysed reaction is (S)-4-amino-5-oxopentanoate = 5-aminolevulinate. Its pathway is porphyrin-containing compound metabolism; protoporphyrin-IX biosynthesis; 5-aminolevulinate from L-glutamyl-tRNA(Glu): step 2/2. This is Glutamate-1-semialdehyde 2,1-aminomutase 2 from Bacillus thuringiensis (strain Al Hakam).